The chain runs to 226 residues: PKHD-type hydroxylase TERTU_2553 (226 aa).

One can recognise a Fe2OG dioxygenase domain in the interval 78 to 177; that stretch reads KIYPPKFNCY…RVASFIWIQS (100 aa). Residues His96, Asp98, and His158 each coordinate Fe cation. A 2-oxoglutarate-binding site is contributed by Arg168.

The cofactor is Fe(2+). It depends on L-ascorbate as a cofactor.

This Teredinibacter turnerae (strain ATCC 39867 / T7901) protein is PKHD-type hydroxylase TERTU_2553.